The sequence spans 266 residues: Vesicle-associated protein 4-1 (266 aa).

The interval 28–57 (STTSSSSTQNPNQNYRSRHGNRNTDISAVS) is disordered. One can recognise an MSP domain in the interval 76 to 199 (RLRLDPSSYL…VEQVLRVIFI (124 aa)). Positions 200–228 (DADRPSAALEKLKRQLDEAEAAVEARKKP) form a coiled coil. A compositionally biased stretch (basic and acidic residues) spans 219–229 (EAAVEARKKPP). A disordered region spans residues 219–239 (EAAVEARKKPPPETGPRVVGE). Ser-264 is modified (phosphoserine).

The protein belongs to the VAMP-associated protein (VAP) (TC 9.B.17) family.

Its function is as follows. May play a role in vesicle trafficking. The protein is Vesicle-associated protein 4-1 (PVA41) of Arabidopsis thaliana (Mouse-ear cress).